The primary structure comprises 311 residues: ADP-L-glycero-D-manno-heptose-6-epimerase (311 aa).

Residues 10 to 11, 31 to 32, Lys38, Lys53, 75 to 79, and Asn92 each bind NADP(+); these read FI, DD, and EGACS. The active-site Proton acceptor is Tyr139. NADP(+) is bound at residue Lys143. Asn174 is a substrate binding site. The NADP(+) site is built by Val175 and Lys183. Residue Lys183 is the Proton acceptor of the active site. Residues Ser185, His192, 206–209, Arg212, and Tyr275 contribute to the substrate site; that span reads FEGE.

The protein belongs to the NAD(P)-dependent epimerase/dehydratase family. HldD subfamily. As to quaternary structure, homopentamer. NADP(+) serves as cofactor.

It catalyses the reaction ADP-D-glycero-beta-D-manno-heptose = ADP-L-glycero-beta-D-manno-heptose. It functions in the pathway nucleotide-sugar biosynthesis; ADP-L-glycero-beta-D-manno-heptose biosynthesis; ADP-L-glycero-beta-D-manno-heptose from D-glycero-beta-D-manno-heptose 7-phosphate: step 4/4. In terms of biological role, catalyzes the interconversion between ADP-D-glycero-beta-D-manno-heptose and ADP-L-glycero-beta-D-manno-heptose via an epimerization at carbon 6 of the heptose. The protein is ADP-L-glycero-D-manno-heptose-6-epimerase of Psychromonas ingrahamii (strain DSM 17664 / CCUG 51855 / 37).